The sequence spans 292 residues: Glycine--tRNA ligase alpha subunit (292 aa).

It belongs to the class-II aminoacyl-tRNA synthetase family. As to quaternary structure, tetramer of two alpha and two beta subunits.

It localises to the cytoplasm. It catalyses the reaction tRNA(Gly) + glycine + ATP = glycyl-tRNA(Gly) + AMP + diphosphate. This chain is Glycine--tRNA ligase alpha subunit, found in Pelotomaculum thermopropionicum (strain DSM 13744 / JCM 10971 / SI).